The sequence spans 1598 residues: Fatty acid synthase subunit alpha (1598 aa).

The disordered stretch occupies residues 96 to 134; the sequence is RTQPHKSSAPQEPVPKAAPKAAPPVPVATAPLPEPGRQV. Over residues 104-115 the composition is skewed to low complexity; it reads APQEPVPKAAPK. The 79-residue stretch at 143–221 folds into the Carrier domain; it reads DVPIQSRDVI…QIVSGSTSTT (79 aa). An O-(pantetheine 4'-phosphoryl)serine modification is found at S181. The segment at 543-784 is ketoreductase (KR) domain; that stretch reads LKGKTVLLTG…LAALLVNPFA (242 aa). The segment at 818–844 is disordered; that stretch reads KQDSTSTPTHQHLPSHHHVDEPEIGKP. A compositionally biased stretch (polar residues) spans 820-829; sequence DSTSTPTHQH. Residues 992–1524 form the Ketosynthase family 3 (KS3) domain; it reads HEIVLTRDLA…QKGAQAIIVH (533 aa). C1175 acts as the For beta-ketoacyl synthase activity in catalysis. Residues 1280–1301 are disordered; the sequence is ASDKTGRSVPSPGKGTLTNARE. Catalysis depends on for beta-ketoacyl synthase activity residues H1409 and H1450.

This sequence belongs to the thiolase-like superfamily. Fungal fatty acid synthetase subunit alpha family. Fatty acid synthase is composed of alpha and beta subunits.

The enzyme catalyses acetyl-CoA + n malonyl-CoA + 2n NADPH + 4n H(+) = a long-chain-acyl-CoA + n CoA + n CO2 + 2n NADP(+).. It catalyses the reaction a fatty acyl-[ACP] + malonyl-[ACP] + H(+) = a 3-oxoacyl-[ACP] + holo-[ACP] + CO2. The catalysed reaction is a (3R)-hydroxyacyl-[ACP] + NADP(+) = a 3-oxoacyl-[ACP] + NADPH + H(+). It participates in mycotoxin biosynthesis. Fatty acid synthase subunit alpha; part of the gene cluster that mediates the biosynthesis of gramillins A and B, bicyclic lipopeptides that induce cell death in maize leaves but not in wheat leaves. The nonribosomal peptide synthetase GRA1 incorporates respectively a glutamic adic (Glu), a leucine (Leu), a serine (Ser), a hydroxyglutamine (HOGln), a 2-amino decanoic acid, and 2 cysteins (CysB and CysA). The biosynthesis of 2-amino decanoic acid incorporated in gramillins could be initiated by a fatty acid synthase composed of the alpha and beta subunits FGSG_00036 and FGSG_11656. The cytochrome P450 monooxygenase FGSG_15680 could hydroxylate the fatty acid chain. Subsequent oxidation to the ketone by the oxidoreductase FGSG_00048 and transamination by aminotransferase FGSG_00049 could form 2-amino-decanoic acid. On the other hand, FGSG_15680 could also be responsible for the HO-modified glutamine at the gamma-position. Whether hydroxylation occurs on the fully assembled product or on the Gln residue prior to assembly into the gramillins requires further proof. The thioredoxin FGSG_00043 could also be required for the disulfide-bond formation between CysA and CysB. The specific involvement of the remaining proteins from the cluster is more difficult to discern, but could have broader regulatory (FGSG_00040 and FGSG_11657) or enzymatic functions (FGSG_00044 and FGSG_00045). The final C-domain of GRA1 does not possess the expected sequence of a termination CT domain, often implicated in macrocyclization and release of a cyclopeptidein fungal NRPs; and the thioesterase FGSG_00047 may act in concert with the terminal C-domain of GRA1 to catalyze the formation of the macrocyclic anhydride and release of the products. The sequence is that of Fatty acid synthase subunit alpha from Gibberella zeae (strain ATCC MYA-4620 / CBS 123657 / FGSC 9075 / NRRL 31084 / PH-1) (Wheat head blight fungus).